A 450-amino-acid chain; its full sequence is Tubulin alpha-5 chain (450 aa).

Residues Gln11, Glu71, Gly144, Thr145, Thr179, Asn206, and Asn228 each coordinate GTP. Glu71 contributes to the Mg(2+) binding site. Residue Glu254 is part of the active site. The residue at position 349 (Thr349) is a Phosphothreonine. The disordered stretch occupies residues 429–450 (EKDYEEVGAEGGDDEEDEGEDY). Residues 431–450 (DYEEVGAEGGDDEEDEGEDY) are compositionally biased toward acidic residues.

The protein belongs to the tubulin family. As to quaternary structure, dimer of alpha and beta chains. A typical microtubule is a hollow water-filled tube with an outer diameter of 25 nm and an inner diameter of 15 nM. Alpha-beta heterodimers associate head-to-tail to form protofilaments running lengthwise along the microtubule wall with the beta-tubulin subunit facing the microtubule plus end conferring a structural polarity. Microtubules usually have 13 protofilaments but different protofilament numbers can be found in some organisms and specialized cells. Mg(2+) serves as cofactor. Post-translationally, undergoes a tyrosination/detyrosination cycle, the cyclic removal and re-addition of a C-terminal tyrosine residue by the enzymes tubulin tyrosine carboxypeptidase (TTCP) and tubulin tyrosine ligase (TTL), respectively.

Its subcellular location is the cytoplasm. It localises to the cytoskeleton. The enzyme catalyses GTP + H2O = GDP + phosphate + H(+). Tubulin is the major constituent of microtubules, a cylinder consisting of laterally associated linear protofilaments composed of alpha- and beta-tubulin heterodimers. Microtubules grow by the addition of GTP-tubulin dimers to the microtubule end, where a stabilizing cap forms. Below the cap, tubulin dimers are in GDP-bound state, owing to GTPase activity of alpha-tubulin. This is Tubulin alpha-5 chain (TUBA5) from Arabidopsis thaliana (Mouse-ear cress).